Consider the following 489-residue polypeptide: Fumarate reductase (CoM/CoB) subunit B (489 aa).

Positions 2–89 constitute a 2Fe-2S ferredoxin-type domain; sequence INVKVLRFEP…GAVIEPVDLP (88 aa). The [2Fe-2S] cluster site is built by Cys53, Cys58, Cys61, and Cys73. 4Fe-4S ferredoxin-type domains follow at residues 124–158 and 178–209; these read PEDYQDTKKLRGCIECFSCISSCPVIKESTEYAGP and AAGGVEEGLYCCTTCGKCAEVCPKELNVPGDA. Positions 136, 139, 142, 146, 189, 192, 195, and 199 each coordinate [4Fe-4S] cluster.

As to quaternary structure, subunit B of the heterodimeric fumarate reductase of methanogenic Archaea, composed of subunits A (TfrA) and B (TfrB). It depends on [2Fe-2S] cluster as a cofactor. Requires [4Fe-4S] cluster as cofactor.

It localises to the cytoplasm. It carries out the reaction coenzyme B + coenzyme M + fumarate = coenzyme M-coenzyme B heterodisulfide + succinate. In terms of biological role, catalyzes the reduction of fumarate with reduced coenzyme M (CoM-S-H) and coenzyme B (CoB-S-H). In vitro, is able to reduces fumarate with reduced benzyl viologen, oxidize CoM-S-H and CoB-S-H to CoM-S-S-CoB with methylene blue, and reduce CoM-S-S-CoB with reduced benzyl viologen. The enzyme has specificity for the two thiol compounds as the CoB--CoM heterodisulfide reductase. The enzyme is very sensitive to oxygen. This is Fumarate reductase (CoM/CoB) subunit B from Methanothermobacter marburgensis (strain ATCC BAA-927 / DSM 2133 / JCM 14651 / NBRC 100331 / OCM 82 / Marburg) (Methanobacterium thermoautotrophicum).